We begin with the raw amino-acid sequence, 510 residues long: NAD(P)H-quinone oxidoreductase subunit 2 B, chloroplastic (510 aa).

Transmembrane regions (helical) follow at residues 24 to 44, 57 to 77, 99 to 119, 124 to 144, 149 to 169, 183 to 203, 227 to 247, 295 to 315, 323 to 343, 354 to 374, 395 to 415, 418 to 438, and 484 to 504; these read LLLFDGSLIFPECILIFGLIL, IPWLYFISSTSLVMSITSLLF, IFQFLILLCSTLCIPLSVEYI, MAITEFLLFVLTATIGGMFLC, LITIFVAPECFSLCSYLLSGY, YLLMGGASSSILVHGFSWLYG, PGISIALIFITVGIGFKLSPA, WHLLLEILAILSMILGNLIAI, MLAYSSIGQIGYVIIGIIVGD, YMLFYISMNLGTFACIVLFGL, ALSLALCLLSLGGLPPLAGFF, LYLFWCGWQAGLYFLVLIGLL, and MIVCVIASTIPGISMNPIIAI.

The protein belongs to the complex I subunit 2 family. In terms of assembly, NDH is composed of at least 16 different subunits, 5 of which are encoded in the nucleus.

The protein resides in the plastid. It localises to the chloroplast thylakoid membrane. It catalyses the reaction a plastoquinone + NADH + (n+1) H(+)(in) = a plastoquinol + NAD(+) + n H(+)(out). The catalysed reaction is a plastoquinone + NADPH + (n+1) H(+)(in) = a plastoquinol + NADP(+) + n H(+)(out). Functionally, NDH shuttles electrons from NAD(P)H:plastoquinone, via FMN and iron-sulfur (Fe-S) centers, to quinones in the photosynthetic chain and possibly in a chloroplast respiratory chain. The immediate electron acceptor for the enzyme in this species is believed to be plastoquinone. Couples the redox reaction to proton translocation, and thus conserves the redox energy in a proton gradient. The polypeptide is NAD(P)H-quinone oxidoreductase subunit 2 B, chloroplastic (Lactuca sativa (Garden lettuce)).